Consider the following 265-residue polypeptide: Mlc titration factor A (265 aa).

Residues histidine 111, histidine 148, histidine 152, and glutamate 211 each coordinate Zn(2+).

The protein belongs to the MtfA family. In terms of assembly, interacts with Mlc. Zn(2+) serves as cofactor.

It localises to the cytoplasm. Involved in the modulation of the activity of the glucose-phosphotransferase system (glucose-PTS). Interacts with the transcriptional repressor Mlc, preventing its interaction with DNA and leading to the modulation of expression of genes regulated by Mlc, including ptsG, which encodes the PTS system glucose-specific EIICB component. In terms of biological role, shows zinc-dependent metallopeptidase activity. The polypeptide is Mlc titration factor A (Salmonella typhi).